A 227-amino-acid chain; its full sequence is Homeobox-leucine zipper protein ATHB-54 (227 aa).

Residues 65–124 (EITKKRKLTPIQLRLLEESFEEEKRLEPDRKLWLAEKLGLQPSQVAVWFQNRRARYKTKQ) constitute a DNA-binding region (homeobox). The leucine-zipper stretch occupies residues 125-153 (LEHDCDSLKASYAKLKTDWDILFVQNQTL). Residues 175–198 (IERKRLGEEGSSVKSDNTQYSEEE) form a disordered region.

It belongs to the HD-ZIP homeobox family. Class I subfamily. In terms of tissue distribution, predominantly expressed in flowers and siliques.

The protein resides in the nucleus. In terms of biological role, probable transcription factor. This chain is Homeobox-leucine zipper protein ATHB-54 (ATHB-54), found in Arabidopsis thaliana (Mouse-ear cress).